Here is a 284-residue protein sequence, read N- to C-terminus: 4-hydroxybenzoate octaprenyltransferase (284 aa).

A run of 9 helical transmembrane segments spans residues I19–M39, F42–I62, I93–L113, T114–F134, H136–A156, L161–T181, L209–Y229, F235–L252, and A264–W284.

It belongs to the UbiA prenyltransferase family. Requires Mg(2+) as cofactor.

The protein localises to the cell inner membrane. It catalyses the reaction all-trans-octaprenyl diphosphate + 4-hydroxybenzoate = 4-hydroxy-3-(all-trans-octaprenyl)benzoate + diphosphate. It functions in the pathway cofactor biosynthesis; ubiquinone biosynthesis. Its function is as follows. Catalyzes the prenylation of para-hydroxybenzoate (PHB) with an all-trans polyprenyl group. Mediates the second step in the final reaction sequence of ubiquinone-8 (UQ-8) biosynthesis, which is the condensation of the polyisoprenoid side chain with PHB, generating the first membrane-bound Q intermediate 3-octaprenyl-4-hydroxybenzoate. The chain is 4-hydroxybenzoate octaprenyltransferase from Vibrio atlanticus (strain LGP32) (Vibrio splendidus (strain Mel32)).